Reading from the N-terminus, the 247-residue chain is uncharacterized protein (247 aa).

The next 2 helical transmembrane spans lie at 11 to 31 and 39 to 59; these read LIAP…IYCV and FIAI…TGLL.

Its subcellular location is the cell membrane. This is an uncharacterized protein from Haemophilus influenzae (strain ATCC 51907 / DSM 11121 / KW20 / Rd).